The primary structure comprises 567 residues: Protein phosphatase 1 regulatory inhibitor subunit 16B (567 aa).

Positions 15-55 form a coiled coil; the sequence is EKVPTLERLRAAQKRRAQQLKKWAQYEQDLQHRKRKHERKR. S69 carries the phosphoserine modification. ANK repeat units lie at residues 100 to 129, 133 to 162, 228 to 257, and 261 to 290; these read DGLT…NVNA, ELWT…DLLA, QGAT…RVDV, and DGWE…SLSA. S333, S337, and S350 each carry phosphoserine. The segment at 378–403 is disordered; the sequence is RTSTYNGDIRETRTDQENKDPNPRLE. The segment covering 385–403 has biased composition (basic and acidic residues); the sequence is DIRETRTDQENKDPNPRLE. S476 carries the phosphoserine modification. The segment covering 504 to 515 has biased composition (polar residues); that stretch reads SSMARTGESSSE. The interval 504–525 is disordered; sequence SSMARTGESSSEGKAPLIGGRT. One copy of the ANK 5 repeat lies at 530 to 559; sequence SNGTSVYYTVTSGDPPLLKFKAPIEEMEEK. C563 is lipidated: S-palmitoyl cysteine. Position 564 is a cysteine methyl ester (C564). Residue C564 is the site of S-farnesyl cysteine attachment. A propeptide spans 565–567 (removed in mature form); the sequence is RIS.

In terms of assembly, interacts with PPP1CA, PPP1CB and MSN. Interacts (via its fourth ankyrin repeat) with the mature dimeric form of RPSA/LAMR1. Interacts with EEF1A1. Interacts with PTEN. Interacts with ECE1. In terms of processing, phosphorylated by PKA and, after PKA priming, by GSK3B. Phosphorylation by GSK3B reduces its association with PP1C and enhances PP1C activity. Dephosphorylation by its associated PP1C results in enhanced association with PP1C, but reduced PP1C activity.

It localises to the cell membrane. The protein resides in the nucleus. The protein localises to the cell projection. Its function is as follows. Regulator of protein phosphatase 1 (PP1) that acts as a positive regulator of pulmonary endothelial cell (EC) barrier function. Involved in the regulation of the PI3K/AKT signaling pathway, angiogenesis and endothelial cell proliferation. Regulates angiogenesis and endothelial cell proliferation through the control of ECE1 dephosphorylation, trafficking and activity. Protects the endothelial barrier from lipopolysaccharide (LPS)-induced vascular leakage. Involved in the regulation of endothelial cell filopodia extension. May be a downstream target for TGF-beta1 signaling cascade in endothelial cells. Involved in PKA-mediated moesin dephosphorylation which is important in EC barrier protection against thrombin stimulation. Promotes the interaction of PPP1CA with RPSA/LAMR1 and in turn facilitates the dephosphorylation of RPSA/LAMR1. Involved in the dephosphorylation of EEF1A1. The polypeptide is Protein phosphatase 1 regulatory inhibitor subunit 16B (PPP1R16B) (Homo sapiens (Human)).